The primary structure comprises 77 residues: Small ribosomal subunit protein uS17 (77 aa).

This sequence belongs to the universal ribosomal protein uS17 family. As to quaternary structure, part of the 30S ribosomal subunit.

Functionally, one of the primary rRNA binding proteins, it binds specifically to the 5'-end of 16S ribosomal RNA. The sequence is that of Small ribosomal subunit protein uS17 from Rickettsia conorii (strain ATCC VR-613 / Malish 7).